A 126-amino-acid chain; its full sequence is Glycine cleavage system H protein (126 aa).

Residues 21–103 (TVTIGISEHA…YEGGWIVKVK (83 aa)) form the Lipoyl-binding domain. Position 62 is an N6-lipoyllysine (Lys-62).

It belongs to the GcvH family. As to quaternary structure, the glycine cleavage system is composed of four proteins: P, T, L and H. Requires (R)-lipoate as cofactor.

In terms of biological role, the glycine cleavage system catalyzes the degradation of glycine. The H protein shuttles the methylamine group of glycine from the P protein to the T protein. This Vibrio vulnificus (strain CMCP6) protein is Glycine cleavage system H protein.